Reading from the N-terminus, the 42-residue chain is Photosystem I reaction center subunit IX (42 aa).

The helical transmembrane segment at tyrosine 8–isoleucine 28 threads the bilayer.

This sequence belongs to the PsaJ family.

It is found in the plastid. The protein localises to the chloroplast thylakoid membrane. Functionally, may help in the organization of the PsaE and PsaF subunits. The polypeptide is Photosystem I reaction center subunit IX (Rhodomonas salina (Cryptomonas salina)).